Reading from the N-terminus, the 549-residue chain is Chaperonin GroEL (549 aa).

ATP contacts are provided by residues 30–33 (TLGP), Lys-51, 87–91 (DGTTT), Gly-415, and Asp-496.

The protein belongs to the chaperonin (HSP60) family. As to quaternary structure, forms a cylinder of 14 subunits composed of two heptameric rings stacked back-to-back. Interacts with the co-chaperonin GroES.

It localises to the cytoplasm. The enzyme catalyses ATP + H2O + a folded polypeptide = ADP + phosphate + an unfolded polypeptide.. In terms of biological role, together with its co-chaperonin GroES, plays an essential role in assisting protein folding. The GroEL-GroES system forms a nano-cage that allows encapsulation of the non-native substrate proteins and provides a physical environment optimized to promote and accelerate protein folding. This chain is Chaperonin GroEL, found in Prosthecochloris aestuarii (strain DSM 271 / SK 413).